We begin with the raw amino-acid sequence, 279 residues long: Tryptophan synthase alpha chain (279 aa).

Catalysis depends on proton acceptor residues Glu-50 and Asp-61.

This sequence belongs to the TrpA family. As to quaternary structure, tetramer of two alpha and two beta chains.

It carries out the reaction (1S,2R)-1-C-(indol-3-yl)glycerol 3-phosphate + L-serine = D-glyceraldehyde 3-phosphate + L-tryptophan + H2O. Its pathway is amino-acid biosynthesis; L-tryptophan biosynthesis; L-tryptophan from chorismate: step 5/5. In terms of biological role, the alpha subunit is responsible for the aldol cleavage of indoleglycerol phosphate to indole and glyceraldehyde 3-phosphate. This Azorhizobium caulinodans (strain ATCC 43989 / DSM 5975 / JCM 20966 / LMG 6465 / NBRC 14845 / NCIMB 13405 / ORS 571) protein is Tryptophan synthase alpha chain.